Reading from the N-terminus, the 193-residue chain is ATP synthase subunit b 2 (193 aa).

The helical transmembrane segment at I44–P64 threads the bilayer.

This sequence belongs to the ATPase B chain family. In terms of assembly, F-type ATPases have 2 components, F(1) - the catalytic core - and F(0) - the membrane proton channel. F(1) has five subunits: alpha(3), beta(3), gamma(1), delta(1), epsilon(1). F(0) has three main subunits: a(1), b(2) and c(10-14). The alpha and beta chains form an alternating ring which encloses part of the gamma chain. F(1) is attached to F(0) by a central stalk formed by the gamma and epsilon chains, while a peripheral stalk is formed by the delta and b chains.

It localises to the cell inner membrane. In terms of biological role, f(1)F(0) ATP synthase produces ATP from ADP in the presence of a proton or sodium gradient. F-type ATPases consist of two structural domains, F(1) containing the extramembraneous catalytic core and F(0) containing the membrane proton channel, linked together by a central stalk and a peripheral stalk. During catalysis, ATP synthesis in the catalytic domain of F(1) is coupled via a rotary mechanism of the central stalk subunits to proton translocation. Component of the F(0) channel, it forms part of the peripheral stalk, linking F(1) to F(0). The b'-subunit is a diverged and duplicated form of b found in plants and photosynthetic bacteria. The protein is ATP synthase subunit b 2 (atpF2) of Jannaschia sp. (strain CCS1).